Reading from the N-terminus, the 510-residue chain is MCGILGIALADQSSVVAPELFDGSLFLQHRGQDAAGMATCGERGRLYQCKGNGMARDVFTQHRMSGLVGSMGIAHLRYPTAGSCANSEAQPFYVNSPYGICLSHNGTLVNTLSLRSYLDEVVHRHINTDSDSELLLNVFAAELERHNKYRVNNDDIFHALEGVYRQCRGGYACVGMLAGYSLFGFRDPNGIRPLLFGERVNPDGTKDYMLASESVVLKAHNFNKFRDLKPGEAVIIPKDCNKQEPEFRQVVPTNSYRPDLFEYVYFARPDSVLDGISVYHTRLQMGIKLAENVKKVVDPDEIDVVVSVPDTARTCALQCANHLNKPYREAFVKNRYVGRTFIMPNQKERVSSVRRKLNPMDFEFKDKRVLIVDDSIVRGTTSKEIINMAKESGATKVYFASAAPAIRFNHIYGIDLADTKQLVAYNRTTDEVAQELGCEKVIYQSLEDLVDCCKTDKIDKFEVGVFTGNYVTGVEDGYLQELERVRALNKAKLTTAKAEVDIGLYNSADY.

Cys2 acts as the Nucleophile in catalysis. One can recognise a Glutamine amidotransferase type-2 domain in the interval 2 to 239; sequence CGILGIALAD…PGEAVIIPKD (238 aa). Residues Asp373 and Asp374 each coordinate Mg(2+).

The protein in the C-terminal section; belongs to the purine/pyrimidine phosphoribosyltransferase family. Mg(2+) is required as a cofactor.

The enzyme catalyses 5-phospho-beta-D-ribosylamine + L-glutamate + diphosphate = 5-phospho-alpha-D-ribose 1-diphosphate + L-glutamine + H2O. The protein operates within purine metabolism; IMP biosynthesis via de novo pathway; N(1)-(5-phospho-D-ribosyl)glycinamide from 5-phospho-alpha-D-ribose 1-diphosphate: step 1/2. The protein is Amidophosphoribosyltransferase (ADE4) of Lachancea kluyveri (Yeast).